Here is a 303-residue protein sequence, read N- to C-terminus: MTRHFLALNQYTKEALDALFALTRELKEEQKKGIPHRILEGKSVALIFEKSSTRTRISFEVGVHQLGAHPLFISSATSQMGRGEPVRDTARVMARYCDGVMIRTYGQEIVEEFARYSSVPVINGLTDLFHPCQIMADLFTVIEHKGKYDGLKFAWVGDGNNMANTWIEAAAILGFDLALACPEGYEPDRTVWDWAQKKATSSITITRDPKEAVRDADVVNTDVWASMGQEQEQKVREVAFKGYCLDDDLVALAKPDCMVLHCLPAHRGEEITDSVIEGPRSAVWDEAENRLHVQKAIMASLLK.

Residues 52–55 (STRT), Gln-79, Arg-103, and 130–133 (HPCQ) each bind carbamoyl phosphate. Residues Asn-161, Asp-222, and 226 to 227 (SM) contribute to the L-ornithine site. Carbamoyl phosphate is bound by residues 262 to 263 (CL) and Arg-290.

Belongs to the aspartate/ornithine carbamoyltransferase superfamily. OTCase family.

The protein localises to the cytoplasm. The enzyme catalyses carbamoyl phosphate + L-ornithine = L-citrulline + phosphate + H(+). The protein operates within amino-acid biosynthesis; L-arginine biosynthesis; L-arginine from L-ornithine and carbamoyl phosphate: step 1/3. In terms of biological role, reversibly catalyzes the transfer of the carbamoyl group from carbamoyl phosphate (CP) to the N(epsilon) atom of ornithine (ORN) to produce L-citrulline. This chain is Ornithine carbamoyltransferase, found in Geobacter metallireducens (strain ATCC 53774 / DSM 7210 / GS-15).